A 70-amino-acid polypeptide reads, in one-letter code: U2-agatoxin-Ao1r (70 aa).

The first 20 residues, 1 to 20 (MRSIISLILISAMVFSMIAP), serve as a signal peptide directing secretion. A propeptide spanning residues 21-34 (VPEEERLQLSEDER) is cleaved from the precursor. Cystine bridges form between cysteine 37–cysteine 53, cysteine 44–cysteine 58, and cysteine 52–cysteine 68. Leucine 69 is subject to Leucine amide.

Belongs to the neurotoxin 01 (U2-agtx) family. Expressed by the venom gland.

The protein resides in the secreted. Its function is as follows. Insect active toxin causing rapid but reversible paralysis in crickets. No activity shown in mammals. Does not show effect on mammalian voltage-gated calcium channels. In Agelena orientalis (Funnel-web spider), this protein is U2-agatoxin-Ao1r.